Reading from the N-terminus, the 272-residue chain is Ribosomal RNA small subunit methyltransferase A (272 aa).

Residues asparagine 27, leucine 29, glycine 54, glutamate 75, aspartate 97, and asparagine 117 each contribute to the S-adenosyl-L-methionine site.

Belongs to the class I-like SAM-binding methyltransferase superfamily. rRNA adenine N(6)-methyltransferase family. RsmA subfamily.

It is found in the cytoplasm. The catalysed reaction is adenosine(1518)/adenosine(1519) in 16S rRNA + 4 S-adenosyl-L-methionine = N(6)-dimethyladenosine(1518)/N(6)-dimethyladenosine(1519) in 16S rRNA + 4 S-adenosyl-L-homocysteine + 4 H(+). Functionally, specifically dimethylates two adjacent adenosines (A1518 and A1519) in the loop of a conserved hairpin near the 3'-end of 16S rRNA in the 30S particle. May play a critical role in biogenesis of 30S subunits. In Malacoplasma penetrans (strain HF-2) (Mycoplasma penetrans), this protein is Ribosomal RNA small subunit methyltransferase A.